A 159-amino-acid chain; its full sequence is uncharacterized protein (159 aa).

It to M.jannaschii MJECL20.

This is an uncharacterized protein from Methanocaldococcus jannaschii (strain ATCC 43067 / DSM 2661 / JAL-1 / JCM 10045 / NBRC 100440) (Methanococcus jannaschii).